The chain runs to 371 residues: Chaperone protein DnaJ (371 aa).

One can recognise a J domain in the interval 6 to 71 (DYYEILGVEK…QKRAQYDRFG (66 aa)). The interval 104-123 (GGMGGQQRQRRNRNEPRRGS) is disordered. The CR-type zinc finger occupies 139–217 (GIEKEIEFDT…CKGKGRVAEH (79 aa)). Zn(2+) contacts are provided by Cys-152, Cys-155, Cys-169, Cys-172, Cys-191, Cys-194, Cys-205, and Cys-208. CXXCXGXG motif repeat units follow at residues 152 to 159 (CDECKGTG), 169 to 176 (CGTCGGSG), 191 to 198 (CPTCHGQG), and 205 to 212 (CKPCKGKG).

This sequence belongs to the DnaJ family. In terms of assembly, homodimer. Requires Zn(2+) as cofactor.

Its subcellular location is the cytoplasm. Functionally, participates actively in the response to hyperosmotic and heat shock by preventing the aggregation of stress-denatured proteins and by disaggregating proteins, also in an autonomous, DnaK-independent fashion. Unfolded proteins bind initially to DnaJ; upon interaction with the DnaJ-bound protein, DnaK hydrolyzes its bound ATP, resulting in the formation of a stable complex. GrpE releases ADP from DnaK; ATP binding to DnaK triggers the release of the substrate protein, thus completing the reaction cycle. Several rounds of ATP-dependent interactions between DnaJ, DnaK and GrpE are required for fully efficient folding. Also involved, together with DnaK and GrpE, in the DNA replication of plasmids through activation of initiation proteins. The protein is Chaperone protein DnaJ of Bdellovibrio bacteriovorus (strain ATCC 15356 / DSM 50701 / NCIMB 9529 / HD100).